The following is a 427-amino-acid chain: Adenylosuccinate synthetase (427 aa).

GTP-binding positions include 12–18 (GDEGKGK) and 40–42 (GHT). Catalysis depends on Asp13, which acts as the Proton acceptor. The Mg(2+) site is built by Asp13 and Gly40. Residues 13-16 (DEGK), 38-41 (NAGH), Thr128, Arg142, Gln223, Thr238, and Arg302 each bind IMP. His41 acts as the Proton donor in catalysis. Substrate is bound at residue 298 to 304 (TTTGRPR). GTP is bound by residues Arg304, 330–332 (LLD), and 412–414 (SVG).

This sequence belongs to the adenylosuccinate synthetase family. Homodimer. Requires Mg(2+) as cofactor.

The protein localises to the cytoplasm. The enzyme catalyses IMP + L-aspartate + GTP = N(6)-(1,2-dicarboxyethyl)-AMP + GDP + phosphate + 2 H(+). Its pathway is purine metabolism; AMP biosynthesis via de novo pathway; AMP from IMP: step 1/2. In terms of biological role, plays an important role in the de novo pathway of purine nucleotide biosynthesis. Catalyzes the first committed step in the biosynthesis of AMP from IMP. The protein is Adenylosuccinate synthetase of Alkaliphilus metalliredigens (strain QYMF).